The following is a 234-amino-acid chain: Ribosomal RNA small subunit methyltransferase G (234 aa).

Residues G74, F79, 125–126, and R144 each bind S-adenosyl-L-methionine; that span reads AE.

Belongs to the methyltransferase superfamily. RNA methyltransferase RsmG family.

It localises to the cytoplasm. Its function is as follows. Specifically methylates the N7 position of a guanine in 16S rRNA. The sequence is that of Ribosomal RNA small subunit methyltransferase G from Roseiflexus sp. (strain RS-1).